The primary structure comprises 587 residues: Probable pectinesterase/pectinesterase inhibitor 61 (587 aa).

The interval 1 to 23 is disordered; that stretch reads MGYDRLGPSGPSNPNQKDPATSL. Residues 10–19 are compositionally biased toward polar residues; sequence GPSNPNQKDP. The helical transmembrane segment at 35-55 threads the bilayer; the sequence is ILFTLAVLVVGVVCFGIFAGI. The segment at 69 to 223 is pectinesterase inhibitor 61; the sequence is RKPTQAISRT…SEMVSNCLAI (155 aa). The tract at residues 273–571 is pectinesterase 61; that stretch reads DITVSKDGSG…FTVAQFISGS (299 aa). The substrate site is built by threonine 349 and glutamine 379. Residue aspartate 402 is the Proton donor; for pectinesterase activity of the active site. Cysteines 416 and 436 form a disulfide. Aspartate 423 (nucleophile; for pectinesterase activity) is an active-site residue. Residues arginine 491 and tryptophan 493 each contribute to the substrate site.

The protein in the N-terminal section; belongs to the PMEI family. In the C-terminal section; belongs to the pectinesterase family. As to expression, expressed in siliques, floral stems and rosettes leaves.

It localises to the membrane. It carries out the reaction [(1-&gt;4)-alpha-D-galacturonosyl methyl ester](n) + n H2O = [(1-&gt;4)-alpha-D-galacturonosyl](n) + n methanol + n H(+). The protein operates within glycan metabolism; pectin degradation; 2-dehydro-3-deoxy-D-gluconate from pectin: step 1/5. In terms of biological role, acts in the modification of cell walls via demethylesterification of cell wall pectin. The protein is Probable pectinesterase/pectinesterase inhibitor 61 (PME61) of Arabidopsis thaliana (Mouse-ear cress).